The primary structure comprises 960 residues: Dynamin-like GTPase OPA1, mitochondrial (960 aa).

Residues 1-87 (MWRLRRAAVA…IKYGYQPRRN (87 aa)) constitute a mitochondrion transit peptide. Residues 88 to 96 (FWPARLATR) are Mitochondrial matrix-facing. The helical transmembrane segment at 97-113 (LLKLRYLILGSAVGGGY) threads the bilayer. Residues 114-770 (TAKKTFDQWK…NAIENMVGPD (657 aa)) are Mitochondrial intermembrane-facing. Positions 210–254 (SDKEKIDQLQEELLHTQLKYQRILERLEKENKELRKLVLQKDDKG) form a coiled coil. At Lys-228 the chain carries N6-acetyllysine. The 277-residue stretch at 285–561 (QDHLPRVVVV…FWKMVRESVE (277 aa)) folds into the Dynamin-type G domain. The tract at residues 295–302 (GDQSAGKT) is G1 motif. Positions 298, 300, 301, 302, 303, and 317 each coordinate GTP. Thr-302 is a Mg(2+) binding site. Residues 321–324 (MMTR) are G2 motif. Residues Thr-323 and Asp-398 each contribute to the Mg(2+) site. A G3 motif region spans residues 398–401 (DLPG). The G4 motif stretch occupies residues 467–470 (TKVD). 3 residues coordinate GTP: Lys-468, Asp-470, and Thr-503. The G5 motif stretch occupies residues 501 to 504 (VVTG). Stalk region stretches follow at residues 589–836 (DRNE…IKDT) and 874–928 (CNDV…IKLL). A paddle region region spans residues 736–856 (SDKQQWDAAI…KTALNHCNLC (121 aa)). An intramembrane segment occupies 771 to 781 (WKKRWLYWKNR). Topologically, residues 782–960 (TQEQCVHNET…AFIEALHQEK (179 aa)) are mitochondrial intermembrane. Cys-856 and Cys-874 form a disulfide bridge. Residues 895 to 960 (RQQLTNTEVR…AFIEALHQEK (66 aa)) are a coiled coil.

The protein belongs to the TRAFAC class dynamin-like GTPase superfamily. Dynamin/Fzo/YdjA family. In terms of assembly, oligomeric complex consisting of membrane-bound and soluble forms of OPA1. Interacts with RCC1L; RCC1L acts as a guanine nucleotide exchange factor (GEF) for OPA1 by exchanging bound GDP for free GTP. Interacts with CHCHD3 and IMMT; these interactions occur preferentially with soluble OPA1 forms. Interacts with PRELID1. Cleaved by OMA1 or YME1L downstream of the transmembrane region in response to different signals to generate soluble forms. Cleaved by OMA1 at position S1 following stress conditions, generating the short soluble form (Dynamin-like GTPase OPA1, short form; S-OPA1). AFG3L2 is involved in the regulation of OMA1-dependent processing of OPA1. PARL-dependent proteolytic processing releases an antiapoptotic soluble form not required for mitochondrial fusion.

It localises to the mitochondrion inner membrane. Its subcellular location is the mitochondrion intermembrane space. It carries out the reaction GTP + H2O = GDP + phosphate + H(+). With respect to regulation, activated by guanine nucleotide exchange factor RCC1L. In terms of biological role, dynamin-related GTPase that is essential for normal mitochondrial morphology by mediating fusion of the mitochondrial inner membranes, regulating cristae morphology and maintaining respiratory chain function. Exists in two forms: the transmembrane, long form (Dynamin-like GTPase OPA1, long form; L-OPA1), which is tethered to the inner mitochondrial membrane, and the short soluble form (Dynamin-like GTPase OPA1, short form; S-OPA1), which results from proteolytic cleavage and localizes in the intermembrane space. Both forms (L-OPA1 and S-OPA1) cooperate to catalyze the fusion of the mitochondrial inner membrane. The equilibrium between L-OPA1 and S-OPA1 is essential: excess levels of S-OPA1, produced by cleavage by OMA1 following loss of mitochondrial membrane potential, lead to an impaired equilibrium between L-OPA1 and S-OPA1, inhibiting mitochondrial fusion. The balance between L-OPA1 and S-OPA1 also influences cristae shape and morphology. Involved in remodeling cristae and the release of cytochrome c during apoptosis. Proteolytic processing by PARL in response to intrinsic apoptotic signals may lead to disassembly of OPA1 oligomers and release of the caspase activator cytochrome C (CYCS) into the mitochondrial intermembrane space. Acts as a regulator of T-helper Th17 cells, which are characterized by cells with fused mitochondria with tight cristae, by mediating mitochondrial membrane remodeling: OPA1 is required for interleukin-17 (IL-17) production. Its role in mitochondrial morphology is required for mitochondrial genome maintenance. Functionally, constitutes the transmembrane long form (L-OPA1) that plays a central role in mitochondrial inner membrane fusion and cristae morphology. L-OPA1 and the soluble short form (S-OPA1) form higher-order helical assemblies that coordinate the fusion of mitochondrial inner membranes. Inner membrane-anchored L-OPA1 molecules initiate membrane remodeling by recruiting soluble S-OPA1 to rapidly polymerize into a flexible cylindrical scaffold encaging the mitochondrial inner membrane. Once at the membrane surface, the formation of S-OPA1 helices induce bilayer curvature. OPA1 dimerization through the paddle region, which inserts into cardiolipin-containing membrane, promotes GTP hydrolysis and the helical assembly of a flexible OPA1 lattice on the membrane, which drives membrane curvature and mitochondrial fusion. Plays a role in the maintenance and remodeling of mitochondrial cristae, some invaginations of the mitochondrial inner membrane that provide an increase in the surface area. Probably acts by forming helical filaments at the inside of inner membrane tubes with the shape and dimensions of crista junctions. The equilibrium between L-OPA1 and S-OPA1 influences cristae shape and morphology: increased L-OPA1 levels promote cristae stacking and elongated mitochondria, while increased S-OPA1 levels correlated with irregular cristae packing and round mitochondria shape. Constitutes the soluble short form (S-OPA1) generated by cleavage by OMA1, which plays a central role in mitochondrial inner membrane fusion and cristae morphology. The transmembrane long form (L-OPA1) and the S-OPA1 form higher-order helical assemblies that coordinate the fusion of mitochondrial inner membranes. Inner membrane-anchored L-OPA1 molecules initiate membrane remodeling by recruiting soluble S-OPA1 to rapidly polymerize into a flexible cylindrical scaffold encaging the mitochondrial inner membrane. Once at the membrane surface, the formation of S-OPA1 helices induce bilayer curvature. OPA1 dimerization through the paddle region, which inserts into cardiolipin-containing membrane, promotes GTP hydrolysis and the helical assembly of a flexible OPA1 lattice on the membrane, which drives membrane curvature and mitochondrial fusion. Excess levels of S-OPA1 produced by cleavage by OMA1 following stress conditions that induce loss of mitochondrial membrane potential, lead to an impaired equilibrium between L-OPA1 and S-OPA1, thereby inhibiting mitochondrial fusion. Involved in mitochondrial safeguard in response to transient mitochondrial membrane depolarization by mediating flickering: cleavage by OMA1 leads to excess production of S-OPA1, preventing mitochondrial hyperfusion. Plays a role in the maintenance and remodeling of mitochondrial cristae, some invaginations of the mitochondrial inner membrane that provide an increase in the surface area. Probably acts by forming helical filaments at the inside of inner membrane tubes with the shape and dimensions of crista junctions. The equilibrium between L-OPA1 and S-OPA1 influences cristae shape and morphology: increased L-OPA1 levels promote cristae stacking and elongated mitochondria, while increased S-OPA1 levels correlated with irregular cristae packing and round mitochondria shape. This is Dynamin-like GTPase OPA1, mitochondrial from Pongo abelii (Sumatran orangutan).